Consider the following 355-residue polypeptide: Methionine import ATP-binding protein MetN 1 (355 aa).

Residues 6–245 form the ABC transporter domain; that stretch reads IDLKDIAVTF…PKAPLTVDFV (240 aa). 42–49 is an ATP binding site; sequence GYSGAGKS.

This sequence belongs to the ABC transporter superfamily. Methionine importer (TC 3.A.1.24) family. In terms of assembly, the complex is composed of two ATP-binding proteins (MetN), two transmembrane proteins (MetI) and a solute-binding protein (MetQ).

It localises to the cell membrane. It carries out the reaction L-methionine(out) + ATP + H2O = L-methionine(in) + ADP + phosphate + H(+). It catalyses the reaction D-methionine(out) + ATP + H2O = D-methionine(in) + ADP + phosphate + H(+). In terms of biological role, part of the ABC transporter complex MetNIQ involved in methionine import. Responsible for energy coupling to the transport system. This chain is Methionine import ATP-binding protein MetN 1, found in Lactiplantibacillus plantarum (strain ATCC BAA-793 / NCIMB 8826 / WCFS1) (Lactobacillus plantarum).